Consider the following 515-residue polypeptide: Centromere protein T (515 aa).

Disordered stretches follow at residues 24–156 (ADSR…KRKQ) and 271–411 (LSGK…DPHK). Basic residues predominate over residues 29–44 (PMRRRSTRINAQRRRS). Positions 45–58 (QTPYSNRQGSQTKT) are enriched in polar residues. Phosphothreonine is present on Thr86. The flexible stalk domain stretch occupies residues 94-375 (ILLTAPESST…DSLPAEQPPP (282 aa)). Residues 296–306 (SSGTRLQSRMS) are compositionally biased toward polar residues. Residues Ser313, Ser333, Ser345, Ser346, Ser357, and Ser376 each carry the phosphoserine modification.

Belongs to the CENP-T/CNN1 family. Component of the CENPA-CAD complex, composed of CENPI, CENPK, CENPL, CENPO, CENPP, CENPQ, CENPR and CENPS. The CENPA-CAD complex is probably recruited on centromeres by the CENPA-NAC complex, at least composed of CENPA, CENPC, CENPH, CENPM, CENPN, CENPT and CENPU. Identified in a centromeric complex containing histones H2A, H2B, H3 and H4, and at least CENPA, CENPB, CENPC, CENPT, CENPN, HJURP, SUPT16H, SSRP1 and RSF1. Interacts (via N-terminus) with the NDC80 complex. Heterodimer with CENPW; this dimer coassembles with CENPS-CENPX heterodimers at centromeres to form the tetrameric CENP-T-W-S-X complex. Post-translationally, dynamically phosphorylated during the cell cycle. Phosphorylated during G2 phase, metaphase and anaphase, but not during telophase or G1 phase.

It is found in the nucleus. The protein localises to the chromosome. Its subcellular location is the centromere. The protein resides in the kinetochore. Its function is as follows. Component of the CENPA-NAC (nucleosome-associated) complex, a complex that plays a central role in assembly of kinetochore proteins, mitotic progression and chromosome segregation. The CENPA-NAC complex recruits the CENPA-CAD (nucleosome distal) complex and may be involved in incorporation of newly synthesized CENPA into centromeres. Part of a nucleosome-associated complex that binds specifically to histone H3-containing nucleosomes at the centromere, as opposed to nucleosomes containing CENPA. Component of the heterotetrameric CENP-T-W-S-X complex that binds and supercoils DNA, and plays an important role in kinetochore assembly. CENPT has a fundamental role in kinetochore assembly and function. It is one of the inner kinetochore proteins, with most further proteins binding downstream. Required for normal chromosome organization and normal progress through mitosis. The sequence is that of Centromere protein T (Cenpt) from Mus musculus (Mouse).